We begin with the raw amino-acid sequence, 285 residues long: Bifunctional protein FolD (285 aa).

Residues 166–168 (GRS), Ser-191, and Thr-232 each bind NADP(+).

The protein belongs to the tetrahydrofolate dehydrogenase/cyclohydrolase family. Homodimer.

The enzyme catalyses (6R)-5,10-methylene-5,6,7,8-tetrahydrofolate + NADP(+) = (6R)-5,10-methenyltetrahydrofolate + NADPH. It carries out the reaction (6R)-5,10-methenyltetrahydrofolate + H2O = (6R)-10-formyltetrahydrofolate + H(+). Its pathway is one-carbon metabolism; tetrahydrofolate interconversion. Its function is as follows. Catalyzes the oxidation of 5,10-methylenetetrahydrofolate to 5,10-methenyltetrahydrofolate and then the hydrolysis of 5,10-methenyltetrahydrofolate to 10-formyltetrahydrofolate. The chain is Bifunctional protein FolD from Chloroflexus aggregans (strain MD-66 / DSM 9485).